Consider the following 322-residue polypeptide: Epoxide hydrolase A (322 aa).

Residues 27–131 enclose the AB hydrolase-1 domain; the sequence is PVVILAHGFP…AVAALSVPAL (105 aa). The Nucleophile role is filled by Asp-103. The active-site Proton acceptor is the His-298.

This sequence belongs to the AB hydrolase superfamily. Epoxide hydrolase family. In terms of assembly, homodimer.

It catalyses the reaction an epoxide + H2O = an ethanediol. Its function is as follows. Could be involved in detoxification of extraneous host-cell epoxides. Catalyzes the hydrolysis of epoxide-containing substrates. This chain is Epoxide hydrolase A (ephA), found in Mycobacterium tuberculosis (strain ATCC 25618 / H37Rv).